A 316-amino-acid chain; its full sequence is Mycothiol acetyltransferase (316 aa).

N-acetyltransferase domains are found at residues 16-153 (REVR…VPAV) and 156-316 (VRIR…PAAN). Glu36 provides a ligand contact to 1D-myo-inositol 2-(L-cysteinylamino)-2-deoxy-alpha-D-glucopyranoside. Acetyl-CoA contacts are provided by residues 83-85 (LVV) and 91-96 (RRGIGS). The 1D-myo-inositol 2-(L-cysteinylamino)-2-deoxy-alpha-D-glucopyranoside site is built by Glu183, Lys228, and Glu238. Residues 242-244 (VGV) and 249-255 (QGRGLGQ) each bind acetyl-CoA. Residue Tyr283 coordinates 1D-myo-inositol 2-(L-cysteinylamino)-2-deoxy-alpha-D-glucopyranoside. 288–293 (NVAAVR) contributes to the acetyl-CoA binding site.

This sequence belongs to the acetyltransferase family. MshD subfamily. As to quaternary structure, monomer.

The enzyme catalyses 1D-myo-inositol 2-(L-cysteinylamino)-2-deoxy-alpha-D-glucopyranoside + acetyl-CoA = mycothiol + CoA + H(+). Catalyzes the transfer of acetyl from acetyl-CoA to desacetylmycothiol (Cys-GlcN-Ins) to form mycothiol. The chain is Mycothiol acetyltransferase from Mycobacterium avium (strain 104).